We begin with the raw amino-acid sequence, 224 residues long: uncharacterized protein (224 aa).

Aspartate 52 is a catalytic residue.

Belongs to the pseudouridine synthase RluA family.

It carries out the reaction a uridine in RNA = a pseudouridine in RNA. This is an uncharacterized protein from Haemophilus influenzae (strain ATCC 51907 / DSM 11121 / KW20 / Rd).